The sequence spans 250 residues: 5'-nucleotidase SurE (250 aa).

A divalent metal cation-binding residues include Asp-8, Asp-9, Ser-40, and Asn-94.

It belongs to the SurE nucleotidase family. A divalent metal cation is required as a cofactor.

It is found in the cytoplasm. The enzyme catalyses a ribonucleoside 5'-phosphate + H2O = a ribonucleoside + phosphate. Functionally, nucleotidase that shows phosphatase activity on nucleoside 5'-monophosphates. This is 5'-nucleotidase SurE from Wolbachia sp. subsp. Brugia malayi (strain TRS).